The sequence spans 115 residues: Large ribosomal subunit protein bL20 (115 aa).

This sequence belongs to the bacterial ribosomal protein bL20 family.

Functionally, binds directly to 23S ribosomal RNA and is necessary for the in vitro assembly process of the 50S ribosomal subunit. It is not involved in the protein synthesizing functions of that subunit. The polypeptide is Large ribosomal subunit protein bL20 (Chlorobium limicola (strain DSM 245 / NBRC 103803 / 6330)).